The following is a 164-amino-acid chain: Translation initiation factor IF-3 (164 aa).

The protein belongs to the IF-3 family. Monomer.

It is found in the cytoplasm. IF-3 binds to the 30S ribosomal subunit and shifts the equilibrium between 70S ribosomes and their 50S and 30S subunits in favor of the free subunits, thus enhancing the availability of 30S subunits on which protein synthesis initiation begins. The protein is Translation initiation factor IF-3 of Bordetella bronchiseptica (strain ATCC BAA-588 / NCTC 13252 / RB50) (Alcaligenes bronchisepticus).